A 916-amino-acid polypeptide reads, in one-letter code: Bifunctional aspartokinase/homoserine dehydrogenase 2, chloroplastic (916 aa).

The N-terminal 87 residues, 1-87, are a transit peptide targeting the chloroplast; it reads MATLKPSFTV…VDQVQIPKGE (87 aa). The aspartokinase stretch occupies residues 88-336; that stretch reads MWSVHKFGGT…VNEAVILQTL (249 aa). Positions 337–562 are interface; that stretch reads SYQEAWEMSY…LSRTTLAMGI (226 aa). ACT domains are found at residues 412 to 487 and 493 to 570; these read VEGT…VIPN and AVGQ…LIGA. The homoserine dehydrogenase stretch occupies residues 563 to 916; sequence VGPGLIGATL…RLASYLGAPS (354 aa). I568 contacts NAD(+). 4 residues coordinate NADP(+): I568, K600, T649, and K673. I568 is a binding site for NADPH. T649 provides a ligand contact to NAD(+). Residues T649 and K673 each coordinate NADPH. E700, V703, A705, and L707 together coordinate Na(+). 2 residues coordinate NADP(+): G758 and E761. E761 and D772 together coordinate L-homoserine. K776 functions as the Proton donor in the catalytic mechanism. G893 provides a ligand contact to NAD(+). G893 lines the NADP(+) pocket. G893 provides a ligand contact to NADPH.

The protein in the N-terminal section; belongs to the aspartokinase family. It in the C-terminal section; belongs to the homoserine dehydrogenase family. In terms of assembly, homo- or heterodimer. A metal cation is required as a cofactor.

It is found in the plastid. The protein resides in the chloroplast. The enzyme catalyses L-homoserine + NADP(+) = L-aspartate 4-semialdehyde + NADPH + H(+). It catalyses the reaction L-homoserine + NAD(+) = L-aspartate 4-semialdehyde + NADH + H(+). It carries out the reaction L-aspartate + ATP = 4-phospho-L-aspartate + ADP. The protein operates within amino-acid biosynthesis; L-lysine biosynthesis via DAP pathway; (S)-tetrahydrodipicolinate from L-aspartate: step 1/4. It functions in the pathway amino-acid biosynthesis; L-methionine biosynthesis via de novo pathway; L-homoserine from L-aspartate: step 1/3. It participates in amino-acid biosynthesis; L-methionine biosynthesis via de novo pathway; L-homoserine from L-aspartate: step 3/3. Its pathway is amino-acid biosynthesis; L-threonine biosynthesis; L-threonine from L-aspartate: step 1/5. The protein operates within amino-acid biosynthesis; L-threonine biosynthesis; L-threonine from L-aspartate: step 3/5. Its activity is regulated as follows. Threonine interaction with Gln-443 leads to inhibition of aspartate kinase activity and facilitates the binding of a second threonine on Gln-524, leading to a partial inhibition of homoserine dehydrogenase activity (25% of activity remaining at saturation with threonine). Homoserine dehydrogenase activity is also partially inhibited by cysteine (15% of activity remaining at saturation with cysteine). No synergy between threonine and cysteine for the inhibition. 13-fold activation of aspartate kinase activity by cysteine, isoleucine, valine, serine and alanine at 2.5 mM and 4-fold activation by leucine at 2.5 mM, but no activation of homoserine dehydrogenase activity. Its function is as follows. Bifunctional aspartate kinase and homoserine dehydrogenase that catalyzes the first and the third steps toward the synthesis of lysine, methionine and threonine from aspartate. The polypeptide is Bifunctional aspartokinase/homoserine dehydrogenase 2, chloroplastic (AKHSDH2) (Arabidopsis thaliana (Mouse-ear cress)).